Reading from the N-terminus, the 458-residue chain is Periphilin-1 (458 aa).

2 stretches are compositionally biased toward basic and acidic residues: residues 1–18 (MWSE…ERAP) and 63–107 (EGRS…DGFR). Disordered stretches follow at residues 1 to 51 (MWSE…SYNR) and 63 to 284 (EGRS…LFED). Positions 103–109 (RDGFRRK) match the Nuclear localization signal motif. A Glycyl lysine isopeptide (Lys-Gly) (interchain with G-Cter in SUMO2) cross-link involves residue K109. 4 positions are modified to phosphoserine: S110, S114, S133, and S140. Over residues 116–142 (YARERSPYKRDNTFFRESPVGRKDSPH) the composition is skewed to basic and acidic residues. Residues 143–154 (SRSGSSVSSRSY) show a composition bias toward low complexity. K160 is covalently cross-linked (Glycyl lysine isopeptide (Lys-Gly) (interchain with G-Cter in SUMO2)). S161 and S167 each carry phosphoserine. A Glycyl lysine isopeptide (Lys-Gly) (interchain with G-Cter in SUMO2) cross-link involves residue K180. The span at 181–194 (RQNEGNPERDKERP) shows a compositional bias: basic and acidic residues. S197 is modified (phosphoserine). A Glycyl lysine isopeptide (Lys-Gly) (interchain with G-Cter in SUMO2) cross-link involves residue K199. S201 and S205 each carry phosphoserine. A compositionally biased stretch (low complexity) spans 205 to 215 (SPSSGSAVSSS). Residues 217–230 (VLDKPSRLTEKELA) are compositionally biased toward basic and acidic residues. K227 is covalently cross-linked (Glycyl lysine isopeptide (Lys-Gly) (interchain with G-Cter in SUMO2)). N6-acetyllysine; alternate occurs at positions 235 and 240. Residues K235 and K240 each participate in a glycyl lysine isopeptide (Lys-Gly) (interchain with G-Cter in SUMO2); alternate cross-link. Over residues 237-246 (AAEKLEKSDE) the composition is skewed to basic and acidic residues. S325 is modified (phosphoserine). A Glycyl lysine isopeptide (Lys-Gly) (interchain with G-Cter in SUMO2) cross-link involves residue K328. The interval 345–406 (GQTWQQVPPV…TQLRRTTGAP (62 aa)) is disordered. Residues 377–386 (PQPPQAPQPL) are compositionally biased toward pro residues. The segment covering 388–398 (PRKKRVRRTTQ) has biased composition (basic residues). K453 participates in a covalent cross-link: Glycyl lysine isopeptide (Lys-Gly) (interchain with G-Cter in SUMO2).

As to quaternary structure, homodimer. Component of the HUSH complex; at least composed of TASOR, PPHLN1 and MPHOSPH8. Interacts with SIN3A and HDAC1. May interact with PPL. In terms of processing, substrate of transglutaminase (in vitro). Ubiquitous.

Its subcellular location is the nucleus. It localises to the cytoplasm. The protein resides in the chromosome. Component of the HUSH complex, a multiprotein complex that mediates epigenetic repression. The HUSH complex is recruited to genomic loci rich in H3K9me3 and is probably required to maintain transcriptional silencing by promoting recruitment of SETDB1, a histone methyltransferase that mediates further deposition of H3K9me3. In the HUSH complex, contributes to the maintenance of the complex at chromatin. Acts as a transcriptional corepressor and regulates the cell cycle, probably via the HUSH complex. The HUSH complex is also involved in the silencing of unintegrated retroviral DNA: some part of the retroviral DNA formed immediately after infection remains unintegrated in the host genome and is transcriptionally repressed. May be involved in epithelial differentiation by contributing to epidermal integrity and barrier formation. This Homo sapiens (Human) protein is Periphilin-1.